A 144-amino-acid chain; its full sequence is Superoxide dismutase [Mn], mitochondrial (144 aa).

Mn(2+) contacts are provided by H10, H58, and D143.

Belongs to the iron/manganese superoxide dismutase family. As to quaternary structure, homotetramer. It depends on Mn(2+) as a cofactor.

It localises to the mitochondrion matrix. It catalyses the reaction 2 superoxide + 2 H(+) = H2O2 + O2. In terms of biological role, destroys superoxide anion radicals which are normally produced within the cells and which are toxic to biological systems. This Palinurus vulgaris (European spiny lobster) protein is Superoxide dismutase [Mn], mitochondrial.